A 217-amino-acid polypeptide reads, in one-letter code: Probable transaldolase (217 aa).

Residue Lys83 is the Schiff-base intermediate with substrate of the active site.

This sequence belongs to the transaldolase family. Type 3B subfamily.

It localises to the cytoplasm. It catalyses the reaction D-sedoheptulose 7-phosphate + D-glyceraldehyde 3-phosphate = D-erythrose 4-phosphate + beta-D-fructose 6-phosphate. It functions in the pathway carbohydrate degradation; pentose phosphate pathway; D-glyceraldehyde 3-phosphate and beta-D-fructose 6-phosphate from D-ribose 5-phosphate and D-xylulose 5-phosphate (non-oxidative stage): step 2/3. Its function is as follows. Transaldolase is important for the balance of metabolites in the pentose-phosphate pathway. This chain is Probable transaldolase, found in Coprothermobacter proteolyticus (strain ATCC 35245 / DSM 5265 / OCM 4 / BT).